The primary structure comprises 516 residues: Probable serine/threonine-protein kinase WNK3 (516 aa).

Residues 22–280 enclose the Protein kinase domain; that stretch reads GRYKEVLGKG…AKELLDDPFL (259 aa). ATP contacts are provided by residues 102–105 and Lys-152; that span reads TEVF. Asp-169 (proton acceptor) is an active-site residue. The tract at residues 426 to 451 is disordered; that stretch reads SSPKAGAGDSRSPFAPRSNSKLSSAQ. The span at 442-451 shows a compositional bias: polar residues; that stretch reads RSNSKLSSAQ. The stretch at 457–490 forms a coiled coil; that stretch reads EVGVIVEKLESLLRKQREEIEEMQRDQERIVTEF.

It belongs to the protein kinase superfamily. Ser/Thr protein kinase family. WNK subfamily.

It carries out the reaction L-seryl-[protein] + ATP = O-phospho-L-seryl-[protein] + ADP + H(+). It catalyses the reaction L-threonyl-[protein] + ATP = O-phospho-L-threonyl-[protein] + ADP + H(+). In terms of biological role, may regulate flowering time by modulating the photoperiod pathway. The protein is Probable serine/threonine-protein kinase WNK3 (WNK3) of Arabidopsis thaliana (Mouse-ear cress).